The sequence spans 500 residues: Probable cytosol aminopeptidase (500 aa).

Mn(2+) contacts are provided by K261 and D266. Residue K273 is part of the active site. Mn(2+) contacts are provided by D284, D343, and E345. The active site involves R347.

It belongs to the peptidase M17 family. The cofactor is Mn(2+).

It is found in the cytoplasm. The enzyme catalyses Release of an N-terminal amino acid, Xaa-|-Yaa-, in which Xaa is preferably Leu, but may be other amino acids including Pro although not Arg or Lys, and Yaa may be Pro. Amino acid amides and methyl esters are also readily hydrolyzed, but rates on arylamides are exceedingly low.. It carries out the reaction Release of an N-terminal amino acid, preferentially leucine, but not glutamic or aspartic acids.. Its function is as follows. Presumably involved in the processing and regular turnover of intracellular proteins. Catalyzes the removal of unsubstituted N-terminal amino acids from various peptides. The sequence is that of Probable cytosol aminopeptidase from Wolbachia pipientis wMel.